We begin with the raw amino-acid sequence, 434 residues long: GTPase Der (434 aa).

EngA-type G domains lie at 3–167 (NIVA…PEIE) and 175–350 (PRFA…ESRS). GTP-binding positions include 9 to 16 (GRPNVGKS), 56 to 60 (DTGGY), 119 to 122 (NKVD), 181 to 188 (GRPNAGKS), 228 to 232 (DTAGI), and 293 to 296 (NKWD). The KH-like domain occupies 351 to 434 (KKIKTRQFND…VPISIFFRKK (84 aa)).

The protein belongs to the TRAFAC class TrmE-Era-EngA-EngB-Septin-like GTPase superfamily. EngA (Der) GTPase family. As to quaternary structure, associates with the 50S ribosomal subunit.

Its function is as follows. GTPase that plays an essential role in the late steps of ribosome biogenesis. The chain is GTPase Der from Christiangramia forsetii (strain DSM 17595 / CGMCC 1.15422 / KT0803) (Gramella forsetii).